The following is a 422-amino-acid chain: S-adenosylmethionine synthase (422 aa).

His-16 is a binding site for ATP. Asp-18 contributes to the Mg(2+) binding site. Residue Glu-44 coordinates K(+). Residues Glu-57 and Gln-100 each contribute to the L-methionine site. The tract at residues 100-110 is flexible loop; that stretch reads QSPDISQGVSA. ATP-binding positions include 175 to 177, 251 to 252, Asp-260, 266 to 267, Ala-283, and Lys-287; these read DGK, KF, and RK. Asp-260 is an L-methionine binding site. Lys-291 provides a ligand contact to L-methionine.

It belongs to the AdoMet synthase family. Homotetramer; dimer of dimers. The cofactor is Mg(2+). It depends on K(+) as a cofactor.

It localises to the cytoplasm. It carries out the reaction L-methionine + ATP + H2O = S-adenosyl-L-methionine + phosphate + diphosphate. It participates in amino-acid biosynthesis; S-adenosyl-L-methionine biosynthesis; S-adenosyl-L-methionine from L-methionine: step 1/1. In terms of biological role, catalyzes the formation of S-adenosylmethionine (AdoMet) from methionine and ATP. The overall synthetic reaction is composed of two sequential steps, AdoMet formation and the subsequent tripolyphosphate hydrolysis which occurs prior to release of AdoMet from the enzyme. This Rippkaea orientalis (strain PCC 8801 / RF-1) (Cyanothece sp. (strain PCC 8801)) protein is S-adenosylmethionine synthase.